A 329-amino-acid chain; its full sequence is Phenylalanine--tRNA ligase alpha subunit (329 aa).

Glutamate 246 is a Mg(2+) binding site.

This sequence belongs to the class-II aminoacyl-tRNA synthetase family. Phe-tRNA synthetase alpha subunit type 1 subfamily. Tetramer of two alpha and two beta subunits. Requires Mg(2+) as cofactor.

Its subcellular location is the cytoplasm. The enzyme catalyses tRNA(Phe) + L-phenylalanine + ATP = L-phenylalanyl-tRNA(Phe) + AMP + diphosphate + H(+). The chain is Phenylalanine--tRNA ligase alpha subunit from Helicobacter hepaticus (strain ATCC 51449 / 3B1).